A 311-amino-acid chain; its full sequence is Taste receptor type 2 member 9 (311 aa).

Residues 1–9 (MPSTIEAIY) are Extracellular-facing. The helical transmembrane segment at 10–32 (IILIAGELTIGIWGNGFIVLVNC) threads the bilayer. Topologically, residues 33 to 52 (IDWLKRRDVSLIDIILISLA) are cytoplasmic. The chain crosses the membrane as a helical span at residues 53-72 (ISRICLLCVISLDGFFILLF). Over 73–86 (PGTYDINVLESIMD) the chain is Extracellular. Residues 87–109 (AVWTFANNSSLWFTSCLSIFYLL) form a helical membrane-spanning segment. The Cytoplasmic segment spans residues 110 to 128 (KIANISHPFFFWLKLKINK). A helical transmembrane segment spans residues 129–146 (VILAILLGSFLISLIISF). Topologically, residues 147-179 (PINGXWYHLFKVSHEENITWAFKVSTIPGAFKQ) are extracellular. Asparagine 163 carries an N-linked (GlcNAc...) asparagine glycan. The chain crosses the membrane as a helical span at residues 180 to 202 (LTLNLGAMVPFMLCLISFFLLLF). The Cytoplasmic portion of the chain corresponds to 203–233 (SLVRHTKQIQLHATGLRDPSTEAHMRAIKAV). A helical transmembrane segment spans residues 234–256 (IIFLLLLIVYYPVFLVMTSSTLI). Over 257–260 (PQGK) the chain is Extracellular. The helical transmembrane segment at 261–283 (LVLMIGDIVTVIFPSSHSFILIM) threads the bilayer. Residues 284-311 (GNSKLREAFLKMLRFVKGFLRRRKPFGP) are Cytoplasmic-facing.

Belongs to the G-protein coupled receptor T2R family.

It is found in the membrane. Functionally, gustducin-coupled receptor implicated in the perception of bitter compounds in the oral cavity and the gastrointestinal tract. Signals through PLCB2 and the calcium-regulated cation channel TRPM5. This Papio hamadryas (Hamadryas baboon) protein is Taste receptor type 2 member 9 (TAS2R9).